Reading from the N-terminus, the 323-residue chain is Aspartate carbamoyltransferase catalytic subunit (323 aa).

The carbamoyl phosphate site is built by arginine 71 and threonine 72. Lysine 99 is a binding site for L-aspartate. Carbamoyl phosphate-binding residues include arginine 121, histidine 151, and glutamine 154. The L-aspartate site is built by arginine 184 and arginine 239. Carbamoyl phosphate is bound by residues glycine 280 and proline 281.

This sequence belongs to the aspartate/ornithine carbamoyltransferase superfamily. ATCase family. In terms of assembly, heterododecamer (2C3:3R2) of six catalytic PyrB chains organized as two trimers (C3), and six regulatory PyrI chains organized as three dimers (R2).

It catalyses the reaction carbamoyl phosphate + L-aspartate = N-carbamoyl-L-aspartate + phosphate + H(+). It functions in the pathway pyrimidine metabolism; UMP biosynthesis via de novo pathway; (S)-dihydroorotate from bicarbonate: step 2/3. Its function is as follows. Catalyzes the condensation of carbamoyl phosphate and aspartate to form carbamoyl aspartate and inorganic phosphate, the committed step in the de novo pyrimidine nucleotide biosynthesis pathway. This is Aspartate carbamoyltransferase catalytic subunit from Cupriavidus pinatubonensis (strain JMP 134 / LMG 1197) (Cupriavidus necator (strain JMP 134)).